A 250-amino-acid chain; its full sequence is Manganese transport system ATP-binding protein MntB (250 aa).

Residues 5-236 enclose the ABC transporter domain; it reads VKVDNLSVFY…MVAKTYQGNL (232 aa). 37 to 44 serves as a coordination point for ATP; the sequence is GPNGAGKS.

The protein belongs to the ABC transporter superfamily.

The protein localises to the cell membrane. This protein is probably a component of a manganese permease, a binding protein-dependent, ATP-driven transport system. Probably responsible for energy coupling to the transport system. The protein is Manganese transport system ATP-binding protein MntB (mntB) of Halalkalibacterium halodurans (strain ATCC BAA-125 / DSM 18197 / FERM 7344 / JCM 9153 / C-125) (Bacillus halodurans).